A 244-amino-acid polypeptide reads, in one-letter code: tRNA (guanine-N(1)-)-methyltransferase (244 aa).

Residues G114 and 134 to 139 (IGDYVL) contribute to the S-adenosyl-L-methionine site. A disordered region spans residues 220–244 (RRPDLLEKAGASPGKSGSNFGKHDA).

The protein belongs to the RNA methyltransferase TrmD family. In terms of assembly, homodimer.

Its subcellular location is the cytoplasm. It catalyses the reaction guanosine(37) in tRNA + S-adenosyl-L-methionine = N(1)-methylguanosine(37) in tRNA + S-adenosyl-L-homocysteine + H(+). Its function is as follows. Specifically methylates guanosine-37 in various tRNAs. This chain is tRNA (guanine-N(1)-)-methyltransferase, found in Rhizobium johnstonii (strain DSM 114642 / LMG 32736 / 3841) (Rhizobium leguminosarum bv. viciae).